A 146-amino-acid polypeptide reads, in one-letter code: Large ribosomal subunit protein eL32 (146 aa).

The protein belongs to the eukaryotic ribosomal protein eL32 family.

The chain is Large ribosomal subunit protein eL32 (rpl32e) from Methanocaldococcus jannaschii (strain ATCC 43067 / DSM 2661 / JAL-1 / JCM 10045 / NBRC 100440) (Methanococcus jannaschii).